The sequence spans 476 residues: Cyclase-associated protein 1 (476 aa).

Disordered regions lie at residues K224–M262 and G277–M319. Positions K231–P243 are enriched in pro residues. Residues S246–S256 are compositionally biased toward low complexity. The segment covering K280 to R293 has biased composition (basic and acidic residues). Positions P316 to L453 constitute a C-CAP/cofactor C-like domain.

It belongs to the CAP family. As to expression, expressed in roots, cotyledons, leaves, stems, flowers, pollen and shoots. Not detected in siliques.

In terms of biological role, actin monomer binding protein that accelerates the exchange of ADP for ATP. Regulates the pool of unpolymerized ATP-actin. Key intermediate between actin-depolymerizing factor (ADF)-mediated disassembly and the profilin-based nucleation and elongation machinery. This is Cyclase-associated protein 1 (CAP1) from Arabidopsis thaliana (Mouse-ear cress).